Here is a 352-residue protein sequence, read N- to C-terminus: Peptide chain release factor 1 (352 aa).

Gln-229 bears the N5-methylglutamine mark.

This sequence belongs to the prokaryotic/mitochondrial release factor family. Post-translationally, methylated by PrmC. Methylation increases the termination efficiency of RF1.

It is found in the cytoplasm. Functionally, peptide chain release factor 1 directs the termination of translation in response to the peptide chain termination codons UAG and UAA. In Acidiphilium cryptum (strain JF-5), this protein is Peptide chain release factor 1.